Here is a 651-residue protein sequence, read N- to C-terminus: Peptidoglycan D,D-transpeptidase MrdA (651 aa).

The chain crosses the membrane as a helical span at residues 30–50; it reads LVAFLGILLLTGVLFTNIYQL. The active-site Acyl-ester intermediate is the S338.

The protein belongs to the transpeptidase family. MrdA subfamily.

The protein localises to the cell inner membrane. The enzyme catalyses Preferential cleavage: (Ac)2-L-Lys-D-Ala-|-D-Ala. Also transpeptidation of peptidyl-alanyl moieties that are N-acyl substituents of D-alanine.. It participates in cell wall biogenesis; peptidoglycan biosynthesis. Catalyzes cross-linking of the peptidoglycan cell wall. This is Peptidoglycan D,D-transpeptidase MrdA from Haemophilus influenzae (strain ATCC 51907 / DSM 11121 / KW20 / Rd).